Here is a 160-residue protein sequence, read N- to C-terminus: Lipoprotein signal peptidase (160 aa).

Transmembrane regions (helical) follow at residues 13 to 33, 72 to 92, and 104 to 124; these read IYIT…RLII, WFLS…ITKL, and SLII…GFVV. Catalysis depends on residues D125 and D143. Residues 134-154 form a helical membrane-spanning segment; the sequence is WHFATFNIADCSIFIGIIILM.

It belongs to the peptidase A8 family.

The protein resides in the cell inner membrane. The enzyme catalyses Release of signal peptides from bacterial membrane prolipoproteins. Hydrolyzes -Xaa-Yaa-Zaa-|-(S,diacylglyceryl)Cys-, in which Xaa is hydrophobic (preferably Leu), and Yaa (Ala or Ser) and Zaa (Gly or Ala) have small, neutral side chains.. The protein operates within protein modification; lipoprotein biosynthesis (signal peptide cleavage). This protein specifically catalyzes the removal of signal peptides from prolipoproteins. This Buchnera aphidicola subsp. Acyrthosiphon pisum (strain 5A) protein is Lipoprotein signal peptidase.